The sequence spans 2353 residues: Nonribosomal peptide synthetase 7 (2353 aa).

Residues 305-684 (TFSALNTRAN…AIEEVEDSAV (380 aa)) form an adenylation 1 region. Positions 776-853 (RDLTDSEKVV…QVAAAVQPQP (78 aa)) constitute a Carrier 1 domain. Ser-813 is subject to O-(pantetheine 4'-phosphoryl)serine. A condensation 1 region spans residues 885–1147 (EDAFPVTPFQ…LMVAPLRVKV (263 aa)). Residues 1338–1725 (TYAGLAIKMN…QTNVFRQCAV (388 aa)) are adenylation 2. Residues 1826–1902 (EICSEAEREL…EQAALMVQGQ (77 aa)) enclose the Carrier 2 domain. Ser-1863 bears the O-(pantetheine 4'-phosphoryl)serine mark. The segment at 1939 to 2214 (EDIYPCSPGQ…NGNCANFLPY (276 aa)) is condensation 2.

It belongs to the NRP synthetase family.

Functionally, nonribosomal peptide synthesis (NRPS) is a key mechanism responsible for the biosynthesis of bioactive metabolites which are potentially contributing to organismal virulence. The protein is Nonribosomal peptide synthetase 7 (NRPS7) of Aspergillus fumigatus (strain ATCC MYA-4609 / CBS 101355 / FGSC A1100 / Af293) (Neosartorya fumigata).